The sequence spans 1262 residues: DNA-directed RNA polymerase subunit beta' (1262 aa).

4 residues coordinate Zn(2+): cysteine 220, cysteine 294, cysteine 301, and cysteine 304.

This sequence belongs to the RNA polymerase beta' chain family. RpoC2 subfamily. In terms of assembly, in cyanobacteria the RNAP catalytic core is composed of 2 alpha, 1 beta, 1 beta', 1 gamma and 1 omega subunit. When a sigma factor is associated with the core the holoenzyme is formed, which can initiate transcription. Zn(2+) serves as cofactor.

It carries out the reaction RNA(n) + a ribonucleoside 5'-triphosphate = RNA(n+1) + diphosphate. Functionally, DNA-dependent RNA polymerase catalyzes the transcription of DNA into RNA using the four ribonucleoside triphosphates as substrates. This chain is DNA-directed RNA polymerase subunit beta', found in Gloeobacter violaceus (strain ATCC 29082 / PCC 7421).